Reading from the N-terminus, the 117-residue chain is Transcription elongation factor A protein-like 8 (117 aa).

Basic and acidic residues-rich tracts occupy residues 1–10 (MQKSCEENEG) and 61–75 (FKED…PEEM). The disordered stretch occupies residues 1–75 (MQKSCEENEG…PVRHLDPEEM (75 aa)). Residues 73 to 100 (EEMIRGVDELERLREEIRRVRNKFVMMH) adopt a coiled-coil conformation.

The protein belongs to the TFS-II family. TFA subfamily.

The protein localises to the nucleus. May be involved in transcriptional regulation. The sequence is that of Transcription elongation factor A protein-like 8 (TCEAL8) from Homo sapiens (Human).